The sequence spans 319 residues: CBBY-like protein (319 aa).

A chloroplast-targeting transit peptide spans 1–65; the sequence is MATVKISLSL…YRSSRSVGVT (65 aa). Asp82 functions as the Nucleophile in the catalytic mechanism. Mg(2+) contacts are provided by Asp82 and Asp84. Asp82 provides a ligand contact to substrate. The active-site Proton donor is Asp84. Residues Glu91, 125-129, 158-161, and 198-204 contribute to the substrate site; these read GGKER, HKQK, and STSNEKA. Asp258 lines the Mg(2+) pocket.

It belongs to the HAD-like hydrolase superfamily. DOG/GPP family. Requires Mg(2+) as cofactor.

It localises to the plastid. Its subcellular location is the chloroplast. It carries out the reaction D-xylulose 1,5-bisphosphate + H2O = D-xylulose 5-phosphate + phosphate. Its function is as follows. Highly selective xylulose-1,5-bisphosphate (XuBP) phosphatase. Also shows activity towards ribulose-1,5-bisphosphate (RuBP) and fructose-1,6-bisphosphate (FBP), but not towards fructose-6-phosphate (F6P) or ribulose-5-phosphate (Ru5P). Degrades xylulose-1,5-bisphosphate, a potent inhibitor of rubisco produced by the rubisco itself. In Arabidopsis thaliana (Mouse-ear cress), this protein is CBBY-like protein.